The primary structure comprises 119 residues: Beta-2-microglobulin (119 aa).

The N-terminal stretch at 1-20 is a signal peptide; sequence MARFVVVALLALLSLSGLEA. In terms of domain architecture, Ig-like C1-type spans 25–114; that stretch reads PKIQVYSRHP…VTFPTPKTVK (90 aa). Cys45 and Cys100 are joined by a disulfide.

It belongs to the beta-2-microglobulin family. As to quaternary structure, heterodimer of an alpha chain and a beta chain. Beta-2-microglobulin is the beta-chain of major histocompatibility complex class I molecules.

The protein resides in the secreted. Component of the class I major histocompatibility complex (MHC). Involved in the presentation of peptide antigens to the immune system. The protein is Beta-2-microglobulin (B2M) of Alouatta seniculus (Red howler monkey).